A 151-amino-acid chain; its full sequence is Viral interleukin-17 (151 aa).

The first 22 residues, 1–22 (MTFRKTSLVLLLLLSIDCIVKS), serve as a signal peptide directing secretion. N-linked (GlcNAc...) asparagine; by host glycosylation is found at Asn-36, Asn-53, and Asn-64. 2 cysteine pairs are disulfide-bonded: Cys-90-Cys-140 and Cys-95-Cys-142.

It belongs to the IL-17 family.

It localises to the secreted. The protein is Viral interleukin-17 (13) of Saimiri sciureus (Common squirrel monkey).